The sequence spans 368 residues: Left-right determination factor 1 (368 aa).

The signal sequence occupies residues 1-21; the sequence is MPFLWLCWALWALSLVSLREA. The propeptide at 22 to 76 is or 135; it reads LTGEQILGSLLQQLQLDQPPVLDKADVEGMVIPSHVRTQYVALLQHSHASRSRGK. Residue asparagine 158 is glycosylated (N-linked (GlcNAc...) asparagine). Cystine bridges form between cysteine 253–cysteine 266, cysteine 265–cysteine 318, cysteine 295–cysteine 353, and cysteine 299–cysteine 355.

The protein belongs to the TGF-beta family. In terms of processing, the processing of the protein may also occur at the second R-X-X-R site located at AA 132-135. Processing appears to be regulated in a cell-type specific manner.

The protein localises to the secreted. Its function is as follows. Required for left-right axis determination as a regulator of LEFTY2 and NODAL. This chain is Left-right determination factor 1 (Lefty1), found in Mus musculus (Mouse).